The sequence spans 407 residues: MPATILKSTASSKTLLIIKFDTNSSRYPFYKKHLLELNSESTFLGLLTKGQADTSITRLNQDDVRLFEKAKTVADRTKDVAYSFSDPILSTQLRTPPPQPTSIRYLYFGTYRIKPWYTSPYPEEYSCAKNLYICESCLKYMNSDHVLQRHKMKCSWSYPPGDEIYRDKNISIFEVDGQRQPIYCQNLCLLAKMFLHSKMLYYDVEPFLFYVLTEFDGQECKVIGYFSKEKRSASDYNVSCILTLPIYQRRGYGVFLIDFSYLLTQVEGKLGSPEKPLSDLGLVTYRSYWKMRVAKALLEITTPISINAIAKSTSMVCDDVISTLESLSVFKYDPLKKKYVLQLKRDELENVYKAWNIKHPQRVNPKLLRWTPYLGEEQISNLLLKENILIPLPQKRLLDNSHHLDSV.

The MYST-type HAT domain occupies 98 to 372 (PQPTSIRYLY…VNPKLLRWTP (275 aa)). The segment at 131–156 (LYICESCLKYMNSDHVLQRHKMKCSW) adopts a C2HC MYST-type zinc-finger fold. At Lys198 the chain carries N6-acetyllysine; by autocatalysis. Acetyl-CoA contacts are provided by residues 241-243 (ILT), Thr243, and 248-254 (QRRGYGV). The active-site Proton donor/acceptor is Glu274. The acetyl-CoA site is built by Ser278 and Ser287.

The protein belongs to the MYST (SAS/MOZ) family. As to quaternary structure, component of the mst2 complex composed of at least eaf6, mst2, nto1, pdp3, ptf1, ptf2 and tfg3. In terms of processing, autoacetylation at Lys-198 is required for proper function.

The protein localises to the cytoplasm. It localises to the nucleus. It carries out the reaction L-lysyl-[protein] + acetyl-CoA = N(6)-acetyl-L-lysyl-[protein] + CoA + H(+). Component of the mst2 complex which is a highly specific H3 lysine 14 (H3K14) acetyltransferase that functions together with gcn5 to regulate global levels of H3K14 acetylation (H3K14ac), critical for DNA damage checkpoint activation. Negatively regulates telomere silencing. Telomere silencing is increased due to histone hypoacetylation and/or an increase in the ratio of methylated histones to acetylated histones. Telomeric histone acetylation contributes to normal meiotic progression. This Schizosaccharomyces pombe (strain 972 / ATCC 24843) (Fission yeast) protein is Histone acetyltransferase mst2 (mst2).